The following is a 202-amino-acid chain: UPF0301 protein BCG_0069 (202 aa).

It belongs to the UPF0301 (AlgH) family.

This is UPF0301 protein BCG_0069 from Mycobacterium bovis (strain BCG / Pasteur 1173P2).